Reading from the N-terminus, the 134-residue chain is Profilin-3 (134 aa).

Cys13 and Cys118 are oxidised to a cystine. The short motif at 84–100 (AVIRGKKGSGGITIKKT) is the Involved in PIP2 interaction element. Residue Thr114 is modified to Phosphothreonine.

Belongs to the profilin family. As to quaternary structure, occurs in many kinds of cells as a complex with monomeric actin in a 1:1 ratio. Post-translationally, phosphorylated by MAP kinases.

Its subcellular location is the cytoplasm. It localises to the cytoskeleton. Binds to actin and affects the structure of the cytoskeleton. At high concentrations, profilin prevents the polymerization of actin, whereas it enhances it at low concentrations. The polypeptide is Profilin-3 (Olea europaea (Common olive)).